The chain runs to 415 residues: Imidazolonepropionase (415 aa).

Residues His75 and His77 each contribute to the Fe(3+) site. Zn(2+)-binding residues include His75 and His77. 4-imidazolone-5-propanoate contacts are provided by Arg84, Tyr147, and His180. N-formimidoyl-L-glutamate is bound at residue Tyr147. His245 contacts Fe(3+). A Zn(2+)-binding site is contributed by His245. Gln248 is a 4-imidazolone-5-propanoate binding site. Asp320 is a binding site for Fe(3+). Zn(2+) is bound at residue Asp320. Residues Asn322 and Gly324 each coordinate N-formimidoyl-L-glutamate. Residue Thr325 coordinates 4-imidazolone-5-propanoate.

This sequence belongs to the metallo-dependent hydrolases superfamily. HutI family. It depends on Zn(2+) as a cofactor. Fe(3+) is required as a cofactor.

It is found in the cytoplasm. The enzyme catalyses 4-imidazolone-5-propanoate + H2O = N-formimidoyl-L-glutamate. It functions in the pathway amino-acid degradation; L-histidine degradation into L-glutamate; N-formimidoyl-L-glutamate from L-histidine: step 3/3. Functionally, catalyzes the hydrolytic cleavage of the carbon-nitrogen bond in imidazolone-5-propanoate to yield N-formimidoyl-L-glutamate. It is the third step in the universal histidine degradation pathway. The protein is Imidazolonepropionase of Photorhabdus laumondii subsp. laumondii (strain DSM 15139 / CIP 105565 / TT01) (Photorhabdus luminescens subsp. laumondii).